The primary structure comprises 448 residues: Adenylosuccinate synthetase (448 aa).

Residues 36-42 (GDEGKGK) and 64-66 (GHT) each bind GTP. D37 (proton acceptor) is an active-site residue. Positions 37 and 64 each coordinate Mg(2+). Residues 37–40 (DEGK), 62–65 (NAGH), T154, R168, N246, T261, and R325 each bind IMP. The active-site Proton donor is the H65. 321-327 (VTTKRKR) is a binding site for substrate. GTP-binding positions include R327, 353 to 355 (KLD), and 436 to 438 (GVG).

This sequence belongs to the adenylosuccinate synthetase family. As to quaternary structure, homodimer. Mg(2+) serves as cofactor.

Its subcellular location is the cytoplasm. It catalyses the reaction IMP + L-aspartate + GTP = N(6)-(1,2-dicarboxyethyl)-AMP + GDP + phosphate + 2 H(+). Its pathway is purine metabolism; AMP biosynthesis via de novo pathway; AMP from IMP: step 1/2. Functionally, plays an important role in the de novo pathway and in the salvage pathway of purine nucleotide biosynthesis. Catalyzes the first committed step in the biosynthesis of AMP from IMP. This is Adenylosuccinate synthetase from Drosophila ananassae (Fruit fly).